The following is a 91-amino-acid chain: Ragulator complex protein LAMTOR5 homolog (91 aa).

This sequence belongs to the LAMTOR5 family. Part of the Ragulator complex.

It localises to the cytoplasm. The protein localises to the lysosome. Regulator of the TOR pathway, a signaling cascade that promotes cell growth in response to growth factors, energy levels, and amino acids. As part of the Ragulator complex, may activate the TOR signaling cascade in response to amino acids. This is Ragulator complex protein LAMTOR5 homolog from Nematostella vectensis (Starlet sea anemone).